We begin with the raw amino-acid sequence, 103 residues long: G0/G1 switch protein 2 (103 aa).

In terms of assembly, directly interacts with BCL2; this interaction prevents the formation of the anti-apoptotic BAX-BCL2 complex.

The protein localises to the mitochondrion. Promotes apoptosis by binding to BCL2, hence preventing the formation of protective BCL2-BAX heterodimers. This is G0/G1 switch protein 2 (G0s2) from Rattus norvegicus (Rat).